We begin with the raw amino-acid sequence, 496 residues long: Cytochrome P450 71D181 (496 aa).

Residues 1–21 traverse the membrane as a helical; Signal-anchor for type II membrane protein segment; it reads MDISISWVAIILVISSYFIFM. C435 serves as a coordination point for heme. Positions 471 to 496 are disordered; the sequence is MSETPGLSGPRKNPLIMVPTIHNPTS.

This sequence belongs to the cytochrome P450 family. The cofactor is heme. As to expression, expressed at low levels in flowers, leaves and stems.

It localises to the membrane. It carries out the reaction alpha-terpinene + 2 reduced [NADPH--hemoprotein reductase] + 2 O2 = carvacrol + 2 oxidized [NADPH--hemoprotein reductase] + 3 H2O + 2 H(+). It catalyses the reaction gamma-terpinene + 2 reduced [NADPH--hemoprotein reductase] + 2 O2 = carvacrol + 2 oxidized [NADPH--hemoprotein reductase] + 3 H2O + 2 H(+). The enzyme catalyses (4S)-limonene + reduced [NADPH--hemoprotein reductase] + O2 = (1S,5R)-carveol + oxidized [NADPH--hemoprotein reductase] + H2O + H(+). The catalysed reaction is (4R)-limonene + reduced [NADPH--hemoprotein reductase] + O2 = (1R,5S)-carveol + oxidized [NADPH--hemoprotein reductase] + H2O + H(+). Its pathway is secondary metabolite biosynthesis; terpenoid biosynthesis. Its function is as follows. Involved in the biosynthesis of phenolic monoterpenes natural products thymol and carvacrol which have a broad range of biological activities acting as antimicrobial compounds, insecticides, antioxidants and pharmaceutical agents. Catalyzes the C2-hydroxylation of gamma-terpinene and alpha-terpinene to produce carvacrol. Also mediates the C6-hydroxylation of (4S)-limonene and (4R)-limonene to form carveol. This Origanum vulgare (Wild marjoram) protein is Cytochrome P450 71D181.